The chain runs to 217 residues: MEDRFEIGRIVRAKTISDAWYRGLNIIRNHGQVITDERGSQIREFMDLMIIIEDPYTDRIPHETAWNEERLEEYAKQLISGENTQDFEYTYGQRLRNWHGKVDQIDYVIEKLQQNPTSRRAIAVTWIPPVDTKVNEVPCMMLDDFKIRDGKIHLTTLFRSHDFGGAYPANLYGLSKLLEYVADKVGTKPGTITTISISAHIYDHDWDMVENIVKGVN.

The active site involves cysteine 139.

It belongs to the thymidylate synthase family. Archaeal-type ThyA subfamily. As to quaternary structure, monomer.

Its subcellular location is the cytoplasm. It participates in pyrimidine metabolism; dTTP biosynthesis. Functionally, may catalyze the biosynthesis of dTMP using an unknown cosubstrate. In Methanosarcina barkeri (strain Fusaro / DSM 804), this protein is Putative thymidylate synthase.